The primary structure comprises 629 residues: tRNA uridine 5-carboxymethylaminomethyl modification enzyme MnmG (629 aa).

Residues 15 to 20, valine 127, and serine 182 each bind FAD; that span reads GAGHAG. Residues 203–227 are disordered; sequence TPPRVKSSTIDYSKTEEQPGDDHPR. Positions 215–227 are enriched in basic and acidic residues; it reads SKTEEQPGDDHPR. Position 274-288 (274-288) interacts with NAD(+); it reads GARYCPSIEDKIVRF. FAD is bound at residue glutamine 371.

Belongs to the MnmG family. As to quaternary structure, homodimer. Heterotetramer of two MnmE and two MnmG subunits. The cofactor is FAD.

The protein localises to the cytoplasm. In terms of biological role, NAD-binding protein involved in the addition of a carboxymethylaminomethyl (cmnm) group at the wobble position (U34) of certain tRNAs, forming tRNA-cmnm(5)s(2)U34. This is tRNA uridine 5-carboxymethylaminomethyl modification enzyme MnmG from Listeria welshimeri serovar 6b (strain ATCC 35897 / DSM 20650 / CCUG 15529 / CIP 8149 / NCTC 11857 / SLCC 5334 / V8).